Reading from the N-terminus, the 124-residue chain is Cytoinsectotoxin-4 (124 aa).

A signal peptide spans 1-19 (MKCFILAAALVLAFACIAA). The propeptide occupies 20 to 62 (SEPAETENEDLDDLSDLEDEEWLDELEEAAEYLESLREFEESR). F123 is subject to Phenylalanine amide.

It belongs to the cationic peptide 06 (cytoinsectotoxin) family. As to expression, expressed by the venom gland.

The protein localises to the secreted. In terms of biological role, insecticidal and antimicrobial peptide. Has insecticidal activity against larvae of flesh fly S.carnaria. Has antibacterial activity against Gram-positive bacterium B.subtilis B-501 (MIC=2.5 uM) and Gram-negative bacterium E.coli DH5alpha (MIC=10 uM). This chain is Cytoinsectotoxin-4, found in Lachesana tarabaevi (Spider).